We begin with the raw amino-acid sequence, 404 residues long: Glycosylated lysosomal membrane protein (404 aa).

An N-terminal signal peptide occupies residues 1–26; the sequence is MSGYEKPSRGWGFCALSPVLLSLLMA. Over 27 to 370 the chain is Lumenal; that stretch reads APLGLLGEET…VDALSPLVLG (344 aa). Asn63, Asn132, Asn157, Asn185, and Asn228 each carry an N-linked (GlcNAc...) asparagine glycan. A helical transmembrane segment spans residues 371–391; it reads IMAVALGAPALMLLAGGLFLL. Residues 392 to 404 are Cytoplasmic-facing; that stretch reads LGRKRDSEYQSIN. The short motif at 400–404 is the Lysosomal targeting motif element; it reads YQSIN.

This sequence belongs to the GLMP family. Interacts (via lumenal domain) with lysosomal protein MFSD1; the interaction starts while both proteins are still in the endoplasmic reticulum and is required for stabilization of MFSD1 in lysosomes but has no direct effect on its targeting to lysosomes or transporter activity. Post-translationally, highly N-glycosylated. N-glycosylation is essential for GLMP stability and for MFSD1 lysosomal localization.

It is found in the lysosome membrane. In terms of biological role, required to protect lysosomal transporter MFSD1 from lysosomal proteolysis and for MFSD1 lysosomal localization. The polypeptide is Glycosylated lysosomal membrane protein (Bos taurus (Bovine)).